A 452-amino-acid polypeptide reads, in one-letter code: MVLNIKAPENIVLKPTITVFGVGGAGSNAVNNMIHANLQGANFVVANTDAQSLEHSLCINKIQLGVSTTRGLGAGASPEVGALAAQESENEIRSSLENSNMVFITAGMGGGTGTGSAPIIARIAKELGILTVGVVTKPFHFEGGHRMKTADKGLIELQQFVDTLIVIPNQNLFRIANEQTTFADAFKMADDVLHAGVRGVTDLMIMPGLINLDFADIKAVMSEMGKAMMGTGEDSGEDRAIKAAESAISNPLLDHSSMCGARGVLINITGGPDMTLFEVDNAANRIREEVDNIDANIIFGSTFNPELKGIIRVSVVATGIDADKVPKYKLAIDKNTNTLPEETYNESIIQHTQIETIPSFNSYSTENIEINESSIKQDYTGNEQELRLHVNAVNKPENNSQKSSFLGKIWESLRTSNNQTLERKNVIVNTVDQDNKESDIHDIPAFLRKKRD.

GTP is bound by residues 24–28 (GAGSN), 111–113 (GTG), E142, R146, and D190.

Belongs to the FtsZ family. As to quaternary structure, homodimer. Polymerizes to form a dynamic ring structure in a strictly GTP-dependent manner. Interacts directly with several other division proteins.

It localises to the cytoplasm. Its function is as follows. Essential cell division protein that forms a contractile ring structure (Z ring) at the future cell division site. The regulation of the ring assembly controls the timing and the location of cell division. One of the functions of the FtsZ ring is to recruit other cell division proteins to the septum to produce a new cell wall between the dividing cells. Binds GTP and shows GTPase activity. This is Cell division protein FtsZ from Rickettsia prowazekii (strain Madrid E).